Reading from the N-terminus, the 508-residue chain is Photosystem II CP47 reaction center protein (508 aa).

6 consecutive transmembrane segments (helical) span residues 21–36, 101–115, 140–156, 203–218, 237–252, and 457–472; these read SVHIMHTALVAGWAGS, IAFSGLCFLAAIWHW, GIHLFLSGVACFGFGAF, IAAGTLGILAGLFHLS, VLSSSIAAVFFAAFVV, and SFALLFFFGHIWHGAR.

It belongs to the PsbB/PsbC family. PsbB subfamily. In terms of assembly, PSII is composed of 1 copy each of membrane proteins PsbA, PsbB, PsbC, PsbD, PsbE, PsbF, PsbH, PsbI, PsbJ, PsbK, PsbL, PsbM, PsbT, PsbX, PsbY, PsbZ, Psb30/Ycf12, at least 3 peripheral proteins of the oxygen-evolving complex and a large number of cofactors. It forms dimeric complexes. Binds multiple chlorophylls. PSII binds additional chlorophylls, carotenoids and specific lipids. serves as cofactor.

Its subcellular location is the plastid membrane. One of the components of the core complex of photosystem II (PSII). It binds chlorophyll and helps catalyze the primary light-induced photochemical processes of PSII. PSII is a light-driven water:plastoquinone oxidoreductase, using light energy to abstract electrons from H(2)O, generating O(2) and a proton gradient subsequently used for ATP formation. This chain is Photosystem II CP47 reaction center protein, found in Cuscuta reflexa (Southern Asian dodder).